We begin with the raw amino-acid sequence, 195 residues long: Dephospho-CoA kinase (195 aa).

In terms of domain architecture, DPCK spans 3–195 (IVGLTGGIGS…IALHENYLNH (193 aa)). 11–16 (GSGKSA) is a binding site for ATP.

This sequence belongs to the CoaE family.

Its subcellular location is the cytoplasm. The catalysed reaction is 3'-dephospho-CoA + ATP = ADP + CoA + H(+). Its pathway is cofactor biosynthesis; coenzyme A biosynthesis; CoA from (R)-pantothenate: step 5/5. Its function is as follows. Catalyzes the phosphorylation of the 3'-hydroxyl group of dephosphocoenzyme A to form coenzyme A. This Acinetobacter baylyi (strain ATCC 33305 / BD413 / ADP1) protein is Dephospho-CoA kinase.